A 291-amino-acid chain; its full sequence is Transcription initiation factor IIE subunit beta (291 aa).

N-acetylmethionine is present on methionine 1. Residues 1–13 (MDPSLLRERELFK) are compositionally biased toward basic and acidic residues. Residues 1 to 63 (MDPSLLRERE…NSDHSNGSFN (63 aa)) form a disordered region. Residues 50 to 62 (GSKQNSDHSNGSF) are compositionally biased toward polar residues. The residue at position 61 (serine 61) is a Phosphoserine. A DNA-binding region (TFIIE beta) is located at residues 66-146 (ALSGSSGYKF…YAFKPKYNVR (81 aa)). Lysine 74 is modified (N6-acetyllysine). The tract at residues 243 to 272 (SSMQESGPKKVAPIQRRKKPASQKKRRFKT) is disordered. The segment covering 257–271 (QRRKKPASQKKRRFK) has biased composition (basic residues).

It belongs to the TFIIE beta subunit family. As to quaternary structure, tetramer of two alpha and two beta chains. Interacts with FACT subunit SUPT16H. Interacts with ATF7IP. Interacts with SND1. Part of TBP-based Pol II pre-initiation complex (PIC), in which Pol II core assembles with general transcription factors and other specific initiation factors including GTF2E1, GTF2E2, GTF2F1, GTF2F2, TCEA1, ERCC2, ERCC3, GTF2H2, GTF2H3, GTF2H4, GTF2H5, GTF2A1, GTF2A2, GTF2B and TBP; this large multi-subunit PIC complex mediates DNA unwinding and targets Pol II core to the transcription start site where the first phosphodiester bond forms.

Its subcellular location is the nucleus. Functionally, recruits TFIIH to the initiation complex and stimulates the RNA polymerase II C-terminal domain kinase and DNA-dependent ATPase activities of TFIIH. Both TFIIH and TFIIE are required for promoter clearance by RNA polymerase. The polypeptide is Transcription initiation factor IIE subunit beta (GTF2E2) (Homo sapiens (Human)).